We begin with the raw amino-acid sequence, 195 residues long: Small ribosomal subunit protein uS4 (195 aa).

The region spanning 109–183 (RRLQTQVFKL…VKRKNLKKNQ (75 aa)) is the S4 RNA-binding domain. The interval 165 to 195 (PFGGGRPGRVKRKNLKKNQGGGGGAAEEEED) is disordered.

This sequence belongs to the universal ribosomal protein uS4 family. In terms of assembly, component of the small ribosomal subunit. Identified in a IGF2BP1-dependent mRNP granule complex containing untranslated mRNAs. Part of the small subunit (SSU) processome, composed of more than 70 proteins and the RNA chaperone small nucleolar RNA (snoRNA) U3.

The protein localises to the cytoplasm. It is found in the nucleus. Its subcellular location is the nucleolus. Its function is as follows. Component of the small ribosomal subunit. The ribosome is a large ribonucleoprotein complex responsible for the synthesis of proteins in the cell. Part of the small subunit (SSU) processome, first precursor of the small eukaryotic ribosomal subunit. During the assembly of the SSU processome in the nucleolus, many ribosome biogenesis factors, an RNA chaperone and ribosomal proteins associate with the nascent pre-rRNA and work in concert to generate RNA folding, modifications, rearrangements and cleavage as well as targeted degradation of pre-ribosomal RNA by the RNA exosome. In Drosophila melanogaster (Fruit fly), this protein is Small ribosomal subunit protein uS4.